A 479-amino-acid polypeptide reads, in one-letter code: Aspartyl/glutamyl-tRNA(Asn/Gln) amidotransferase subunit B (479 aa).

The protein belongs to the GatB/GatE family. GatB subfamily. Heterotrimer of A, B and C subunits.

It catalyses the reaction L-glutamyl-tRNA(Gln) + L-glutamine + ATP + H2O = L-glutaminyl-tRNA(Gln) + L-glutamate + ADP + phosphate + H(+). The catalysed reaction is L-aspartyl-tRNA(Asn) + L-glutamine + ATP + H2O = L-asparaginyl-tRNA(Asn) + L-glutamate + ADP + phosphate + 2 H(+). In terms of biological role, allows the formation of correctly charged Asn-tRNA(Asn) or Gln-tRNA(Gln) through the transamidation of misacylated Asp-tRNA(Asn) or Glu-tRNA(Gln) in organisms which lack either or both of asparaginyl-tRNA or glutaminyl-tRNA synthetases. The reaction takes place in the presence of glutamine and ATP through an activated phospho-Asp-tRNA(Asn) or phospho-Glu-tRNA(Gln). This chain is Aspartyl/glutamyl-tRNA(Asn/Gln) amidotransferase subunit B, found in Streptococcus pyogenes serotype M49 (strain NZ131).